Reading from the N-terminus, the 290-residue chain is Cell division protein ZipA (290 aa).

A topological domain (periplasmic) is located at residue Met1. Residues 2 to 22 traverse the membrane as a helical segment; sequence DIGLREWLIVIGLIVIAGILF. The Cytoplasmic segment spans residues 23–290; the sequence is DGWRRMRGGK…HERRSLMQKR (268 aa). Positions 66–143 are disordered; that stretch reads REPSFDEQDL…REKAPSVAAA (78 aa). A compositionally biased stretch (basic and acidic residues) spans 81–99; sequence REGKERKGGKRQDEPRQGD. Residues 100-114 show a composition bias toward acidic residues; sequence LDLDEGMALEADPSD.

The protein belongs to the ZipA family. In terms of assembly, interacts with FtsZ via their C-terminal domains.

The protein resides in the cell inner membrane. Functionally, essential cell division protein that stabilizes the FtsZ protofilaments by cross-linking them and that serves as a cytoplasmic membrane anchor for the Z ring. Also required for the recruitment to the septal ring of downstream cell division proteins. This chain is Cell division protein ZipA, found in Pseudomonas paraeruginosa (strain DSM 24068 / PA7) (Pseudomonas aeruginosa (strain PA7)).